The following is a 515-amino-acid chain: Sugar transport protein MST4 (515 aa).

Residues Met1 to Lys17 are Cytoplasmic-facing. Residues Ile18–Tyr38 form a helical membrane-spanning segment. Residues Asp39 to Gln78 lie on the Extracellular side of the membrane. A helical membrane pass occupies residues Gly79–Ser99. The Cytoplasmic portion of the chain corresponds to Tyr100–Arg108. A helical membrane pass occupies residues Leu109–Gln129. Over Asn130–Arg138 the chain is Extracellular. A helical transmembrane segment spans residues Ile139 to Ile159. Residues Ala160–Arg165 are Cytoplasmic-facing. The chain crosses the membrane as a helical span at residues Gly166 to Val186. The Extracellular segment spans residues Asn187–Arg199. The chain crosses the membrane as a helical span at residues Leu200 to Val220. At Asp221 to Gln280 the chain is on the cytoplasmic side. A helical membrane pass occupies residues Leu281–Phe301. The Extracellular segment spans residues Tyr302–Asp315. The chain crosses the membrane as a helical span at residues Ala316–Val336. The Cytoplasmic portion of the chain corresponds to Tyr337–Leu347. Residues Leu348–Ile368 traverse the membrane as a helical segment. At Lys369–His379 the chain is on the extracellular side. Residues Gly380–Trp400 form a helical membrane-spanning segment. Residues Gly401 to Ser422 are Cytoplasmic-facing. A helical transmembrane segment spans residues Val423–Leu443. The Extracellular segment spans residues Cys444–Tyr448. Residues Ala449 to Leu469 traverse the membrane as a helical segment. Over Pro470–Val515 the chain is Cytoplasmic.

This sequence belongs to the major facilitator superfamily. Sugar transporter (TC 2.A.1.1) family. As to expression, expressed in roots, shoots, leaf blades, leaf sheaths, anthers, ovaries and embryos.

The protein resides in the membrane. Its function is as follows. Mediates active uptake of hexoses by sugar:proton symport. Can transport glucose, fructose, mannose and galactose. Can transport xylose and ribose. The sequence is that of Sugar transport protein MST4 from Oryza sativa subsp. japonica (Rice).